A 138-amino-acid chain; its full sequence is Large ribosomal subunit protein uL16 (138 aa).

Positions 1-17 (MLQPKRTKFRKQHKGRN) are enriched in basic residues. Residues 1–22 (MLQPKRTKFRKQHKGRNRGVAT) are disordered.

Belongs to the universal ribosomal protein uL16 family. In terms of assembly, part of the 50S ribosomal subunit.

Functionally, binds 23S rRNA and is also seen to make contacts with the A and possibly P site tRNAs. The protein is Large ribosomal subunit protein uL16 of Acidithiobacillus ferrooxidans (strain ATCC 23270 / DSM 14882 / CIP 104768 / NCIMB 8455) (Ferrobacillus ferrooxidans (strain ATCC 23270)).